The following is a 336-amino-acid chain: Tyrosine recombinase XerC (336 aa).

Positions 14 to 106 constitute a Core-binding (CB) domain; that stretch reads VARCRWLEPF…SVKSFYRFLL (93 aa). Positions 127 to 330 constitute a Tyr recombinase domain; it reads KVPRFVSEEE…TFSRLKEIYD (204 aa). Residues Arg-183, Lys-207, His-282, Arg-285, and His-308 contribute to the active site. Tyr-317 functions as the O-(3'-phospho-DNA)-tyrosine intermediate in the catalytic mechanism.

It belongs to the 'phage' integrase family. XerC subfamily. As to quaternary structure, forms a cyclic heterotetrameric complex composed of two molecules of XerC and two molecules of XerD.

The protein resides in the cytoplasm. In terms of biological role, site-specific tyrosine recombinase, which acts by catalyzing the cutting and rejoining of the recombining DNA molecules. The XerC-XerD complex is essential to convert dimers of the bacterial chromosome into monomers to permit their segregation at cell division. It also contributes to the segregational stability of plasmids. This Chlorobaculum parvum (strain DSM 263 / NCIMB 8327) (Chlorobium vibrioforme subsp. thiosulfatophilum) protein is Tyrosine recombinase XerC.